The chain runs to 705 residues: Dolichyl-diphosphooligosaccharide--protein glycosyltransferase subunit STT3A (705 aa).

At 1 to 17 the chain is on the cytoplasmic side; the sequence is MTKFGFLRLSYEKQDTL. A helical membrane pass occupies residues 18–38; sequence LKLLILSMAAVLSFSTRLFAV. The Lumenal portion of the chain corresponds to 39–119; that stretch reads LRFESVIHEF…IDIRNVCVFL (81 aa). Residues 47 to 49 carry the DXD motif 1 motif; that stretch reads EFD. Aspartate 49 is a binding site for Mn(2+). The chain crosses the membrane as a helical span at residues 120–138; that stretch reads APLFSSFTTIVTYHLTKEL. The Cytoplasmic portion of the chain corresponds to 139–140; it reads KD. A helical membrane pass occupies residues 141 to 158; sequence AGAGLLAAAMIAVVPGYI. Over 159–169 the chain is Lumenal; it reads SRSVAGSYDNE. Positions 167 and 169 each coordinate Mn(2+). The short motif at 167–169 is the DXD motif 2 element; the sequence is DNE. A helical transmembrane segment spans residues 170–189; the sequence is GIAIFCMLLTYYMWIKAVKT. At 190-191 the chain is on the cytoplasmic side; the sequence is GS. A helical membrane pass occupies residues 192–206; that stretch reads ICWAAKCALAYFYMV. The Lumenal portion of the chain corresponds to 207–211; sequence SSWGG. The chain crosses the membrane as a helical span at residues 212–228; the sequence is YVFLINLIPLHVLVLML. Residues 229 to 233 are Cytoplasmic-facing; sequence TGRFS. Residues 234 to 259 traverse the membrane as a helical segment; that stretch reads HRIYVAYCTVYCLGTILSMQISFVGF. Residues 260-267 are Lumenal-facing; it reads QPVLSSEH. Residues 268–287 form a helical membrane-spanning segment; that stretch reads MAAFGVFGLCQIHAFVDYLR. Residues 288–300 lie on the Cytoplasmic side of the membrane; it reads SKLNPQQFEVLFR. The helical transmembrane segment at 301–321 threads the bilayer; it reads SVISLVGFVLLTVGALLMLTG. The Lumenal segment spans residues 322-356; sequence KISPWTGRFYSLLDPSYAKNNIPIIASVSEHQPTT. Positions 348–351 match the SVSE motif motif; sequence SVSE. The helical transmembrane segment at 357–379 threads the bilayer; it reads WSSYYFDLQLLVFMFPVGLYYCF. Topologically, residues 380–385 are cytoplasmic; sequence SNLSDA. A helical membrane pass occupies residues 386-402; the sequence is RIFIIMYGVTSMYFSAV. The Lumenal segment spans residues 403 to 406; the sequence is MVRL. Residue arginine 405 participates in dolichyl diphosphooligosaccharide binding. A helical transmembrane segment spans residues 407 to 428; it reads MLVLAPVMCILSGIGVSQVLST. Over 429–453 the chain is Cytoplasmic; sequence YMKNLDISRPDKKSKKQQDSTYPIK. The helical transmembrane segment at 454–473 threads the bilayer; sequence NEVASGMILVMAFFLITYTF. The Lumenal segment spans residues 474-705; it reads HSTWVTSEAY…DLDNRGLSRT (232 aa). An interacts with target acceptor peptide in protein substrate region spans residues 525-527; that stretch reads WWD. Residues 525-529 carry the WWDYG motif motif; sequence WWDYG. Tyrosine 530 contacts dolichyl diphosphooligosaccharide. 2 N-linked (GlcNAc...) asparagine glycosylation sites follow: asparagine 537 and asparagine 544. An N-linked (GlcNAc...) (high mannose) asparagine glycan is attached at asparagine 548. The DK motif signature appears at 592–599; the sequence is DINKFLWM.

Belongs to the STT3 family. In terms of assembly, component of the oligosaccharyltransferase (OST) complex. There are 2 OST complexes, OST-A and OST-B, which contain STT3A or STT3B as catalytic subunit, respectively. OST-A and OST-B contain common core subunits RPN1, RPN2, OST48, OST4, DAD1 and TMEM258, and OST-A contains DC2/OSTC and KRTCAP2/KCP2 specific accessory subunits. OST-A complex assembly occurs through the formation of 3 subcomplexes. Subcomplex 1 contains RPN1 and TMEM258, subcomplex 2 contains the OST-A-specific subunits STT3A, DC2/OSTC, and KCP2 as well as the core subunit OST4, and subcomplex 3 contains RPN2, DAD1, and OST48. The OST-A complex can form stable complexes with the Sec61 complex or with both the Sec61 and TRAP complexes. Mg(2+) is required as a cofactor. It depends on Mn(2+) as a cofactor. In terms of tissue distribution, expressed at high levels in placenta, liver, muscle and pancreas, and at very low levels in brain, lung and kidney. Expressed in skin fibroblasts (at protein level).

The protein resides in the endoplasmic reticulum. The protein localises to the endoplasmic reticulum membrane. It carries out the reaction a di-trans,poly-cis-dolichyl diphosphooligosaccharide + L-asparaginyl-[protein] = N(4)-(oligosaccharide-(1-&gt;4)-N-acetyl-beta-D-glucosaminyl-(1-&gt;4)-N-acetyl-beta-D-glucosaminyl)-L-asparaginyl-[protein] + a di-trans,poly-cis-dolichyl diphosphate + H(+). The protein operates within protein modification; protein glycosylation. STT3A, but not STT3B, is specifically inhibited by the N-glycosylation inhibitor NGI-235, which prevents productive binding pose of the glycan donor in the active site of STT3A. Its function is as follows. Catalytic subunit of the oligosaccharyl transferase (OST) complex that catalyzes the initial transfer of a defined glycan (Glc(3)Man(9)GlcNAc(2) in eukaryotes) from the lipid carrier dolichol-pyrophosphate to an asparagine residue within an Asn-X-Ser/Thr consensus motif in nascent polypeptide chains, the first step in protein N-glycosylation. N-glycosylation occurs cotranslationally and the complex associates with the Sec61 complex at the channel-forming translocon complex that mediates protein translocation across the endoplasmic reticulum (ER). All subunits are required for a maximal enzyme activity. This subunit contains the active site and the acceptor peptide and donor lipid-linked oligosaccharide (LLO) binding pockets. STT3A is present in the majority of OST complexes and mediates cotranslational N-glycosylation of most sites on target proteins, while STT3B-containing complexes are required for efficient post-translational glycosylation and mediate glycosylation of sites that have been skipped by STT3A. STT3A-containing OST-A complex is also required to prevent hyperglycosylation of some target proteins by preventing glycosylation of facultative sites before folding of target proteins is completed. This is Dolichyl-diphosphooligosaccharide--protein glycosyltransferase subunit STT3A from Homo sapiens (Human).